Reading from the N-terminus, the 310-residue chain is Methionyl-tRNA formyltransferase (310 aa).

A (6S)-5,6,7,8-tetrahydrofolate-binding site is contributed by 111 to 114 (SLLP).

This sequence belongs to the Fmt family.

It carries out the reaction L-methionyl-tRNA(fMet) + (6R)-10-formyltetrahydrofolate = N-formyl-L-methionyl-tRNA(fMet) + (6S)-5,6,7,8-tetrahydrofolate + H(+). In terms of biological role, attaches a formyl group to the free amino group of methionyl-tRNA(fMet). The formyl group appears to play a dual role in the initiator identity of N-formylmethionyl-tRNA by promoting its recognition by IF2 and preventing the misappropriation of this tRNA by the elongation apparatus. This Afipia carboxidovorans (strain ATCC 49405 / DSM 1227 / KCTC 32145 / OM5) (Oligotropha carboxidovorans) protein is Methionyl-tRNA formyltransferase.